Reading from the N-terminus, the 373-residue chain is Cathecol O-methyltransferase 1 (373 aa).

S-adenosyl-L-homocysteine contacts are provided by Gly-209, Asp-232, Asp-252, Met-253, Met-265, and Lys-266. Position 232 (Asp-232) interacts with S-adenosyl-L-methionine. The Proton acceptor role is filled by His-279.

This sequence belongs to the class I-like SAM-binding methyltransferase superfamily. Cation-independent O-methyltransferase family. COMT subfamily.

The enzyme catalyses catechol + S-adenosyl-L-methionine = guaiacol + S-adenosyl-L-homocysteine + H(+). Functionally, O-methyltransferase that catalyzes the conversion of catechol to guaiacol. Involved in the production of guaiacol in fruits. The sequence is that of Cathecol O-methyltransferase 1 from Solanum lycopersicum (Tomato).